Reading from the N-terminus, the 155-residue chain is Ribosomal RNA large subunit methyltransferase H (155 aa).

S-adenosyl-L-methionine is bound by residues L72, G103, and 122-127 (LSDLTL).

It belongs to the RNA methyltransferase RlmH family. Homodimer.

The protein localises to the cytoplasm. The catalysed reaction is pseudouridine(1915) in 23S rRNA + S-adenosyl-L-methionine = N(3)-methylpseudouridine(1915) in 23S rRNA + S-adenosyl-L-homocysteine + H(+). Functionally, specifically methylates the pseudouridine at position 1915 (m3Psi1915) in 23S rRNA. This chain is Ribosomal RNA large subunit methyltransferase H, found in Acidovorax ebreus (strain TPSY) (Diaphorobacter sp. (strain TPSY)).